The primary structure comprises 186 residues: ADP-ribosylation factor-like protein 8A (186 aa).

The note=Mediates targeting to membranes intramembrane region spans 1 to 19 (MLALFNKLLDWFKALFWKE). Residues 29–35 (QYSGKTT), 71–75 (DIGGQ), and 130–133 (NKRD) contribute to the GTP site.

Belongs to the small GTPase superfamily. Arf family.

It is found in the late endosome membrane. The protein resides in the lysosome membrane. May play a role in lysosomes motility. Alternatively, may play a role in chromosome segregation. The sequence is that of ADP-ribosylation factor-like protein 8A (arl8a) from Xenopus tropicalis (Western clawed frog).